Consider the following 1529-residue polypeptide: ATP-dependent permease PDR15 (1529 aa).

The segment covering 1 to 13 (MSSDIRDVEERNS) has biased composition (basic and acidic residues). Residues 1 to 38 (MSSDIRDVEERNSRSSSSSSSSNSAAQSIGQHPYRGFD) are disordered. At 1–531 (MSSDIRDVEE…NFWRMKQSAS (531 aa)) the chain is on the cytoplasmic side. Over residues 14 to 24 (RSSSSSSSSNS) the composition is skewed to low complexity. Residues 171–420 (LRLLKPSKEE…FQDMGYYCPP (250 aa)) enclose the ABC transporter 1 domain. Residues 532-552 (VTLWQVIGNSVMAFILGSMFY) traverse the membrane as a helical segment. The Extracellular portion of the chain corresponds to 553–567 (KVMKKNDTSTFYFRG). Residue N558 is glycosylated (N-linked (GlcNAc...) asparagine). A helical membrane pass occupies residues 568–588 (AAMFFAILFNAFSCLLEIFSL). Residues 589–617 (YETRPITEKHRTYSLYHPSADAFASVLSE) lie on the Cytoplasmic side of the membrane. A helical membrane pass occupies residues 618–638 (MPPKLITAVCFNIIFYFLVDF). The Extracellular portion of the chain corresponds to 639–642 (RRNG). The helical transmembrane segment at 643–663 (GVFFFYFLINVIATFTLSHLF) threads the bilayer. Residues 664 to 699 (RCVGSLTKTLQEAMVPASMLLLAISMYTGFAIPKTK) lie on the Cytoplasmic side of the membrane. Residues 700–720 (ILGWSIWIWYINPLAYLFESL) traverse the membrane as a helical segment. At 721–783 (MINEFHDRRF…YDYEHKHKWR (63 aa)) the chain is on the extracellular side. N744 is a glycosylation site (N-linked (GlcNAc...) asparagine). Residues 784–804 (GFGIGMAYVVFFFFVYLILCE) traverse the membrane as a helical segment. Over 805–1219 (YNEGAKQKGE…LFQQYWRSPD (415 aa)) the chain is Cytoplasmic. A compositionally biased stretch (basic and acidic residues) spans 829–840 (EGKLQEKHRPGD). The tract at residues 829 to 873 (EGKLQEKHRPGDIENNAGSSPDSATTEKKILDDSSEGSDSSSDNA) is disordered. The ABC transporter 2 domain maps to 884–1127 (FHWRDLCYDV…MIDYFESKGA (244 aa)). Residue 920-927 (GASGAGKT) coordinates ATP. Residues 1220–1240 (YLWSKFILTIFNQVFIGFTFF) form a helical membrane-spanning segment. Residues 1241–1312 (KADRSLQGLQ…VEIPWNILAG (72 aa)) lie on the Extracellular side of the membrane. Residues 1313–1333 (TIAYCIYYYAVGFYANASAAG) traverse the membrane as a helical segment. Residues 1334 to 1340 (QLHERGA) are Cytoplasmic-facing. The chain crosses the membrane as a helical span at residues 1341–1361 (LFWLFSIAFYVYIGSMGLLMI). The Extracellular segment spans residues 1362-1368 (SFNEVAE). Residues 1369 to 1389 (TAAHMGTLLFTMALSFCGVMA) traverse the membrane as a helical segment. The Cytoplasmic portion of the chain corresponds to 1390 to 1396 (TPKVMPR). Residues 1397–1417 (FWIFMYRVSPLTYMIDALLAL) traverse the membrane as a helical segment. Topologically, residues 1418–1492 (GVANVDVKCS…SSHYYRRWRN (75 aa)) are extracellular. A helical transmembrane segment spans residues 1493–1513 (YGIFICYIAFDYIAATFLYWL). Over 1514-1529 (SRVPKKNGKISEKPKK) the chain is Cytoplasmic.

This sequence belongs to the ABC transporter superfamily. ABCG family. PDR (TC 3.A.1.205) subfamily.

Its subcellular location is the membrane. This chain is ATP-dependent permease PDR15 (PDR15), found in Saccharomyces cerevisiae (strain ATCC 204508 / S288c) (Baker's yeast).